Reading from the N-terminus, the 610-residue chain is Zinc metalloproteinase-disintegrin-like halysase (610 aa).

Positions 1–20 are cleaved as a signal peptide; sequence MIQVLLVTICLAVFPYQGSS. The propeptide occupies 21-182; sequence IILESGNVND…WESYEPIKKA (162 aa). The 197-residue stretch at 199–395 folds into the Peptidase M12B domain; sequence KYVKLVMVAD…DMPQCILKKP (197 aa). Residue N218 is glycosylated (N-linked (GlcNAc...) asparagine). 3 disulfide bridges follow: C310–C390, C350–C374, and C352–C357. Residue H335 coordinates Zn(2+). Residue E336 is part of the active site. Positions 339 and 345 each coordinate Zn(2+). The region spanning 403 to 488 is the Disintegrin domain; the sequence is PPVCGNYFVE…AECTDRFQRN (86 aa). The Ca(2+) site is built by V405, N408, F410, E412, E415, and D418. 14 cysteine pairs are disulfide-bonded: C406/C435, C417/C430, C419/C425, C429/C452, C443/C449, C448/C474, C461/C481, C468/C499, C492/C504, C511/C561, C526/C572, C539/C549, C556/C598, and C592/C603. Residues 467–469 carry the D/ECD-tripeptide motif; sequence ECD.

It belongs to the venom metalloproteinase (M12B) family. P-III subfamily. P-IIIa sub-subfamily. Monomer. Requires Zn(2+) as cofactor. In terms of tissue distribution, expressed by the venom gland.

The protein resides in the secreted. With respect to regulation, inhibited by EDTA and EGTA. Not inhibited by PMSF, antipain, pepstatin, and iodoacetamide. Its function is as follows. Strongly inhibits the collagen-induced human platelet aggregation (inhibition of alpha-2/beta-1 (ITGA2/ITGB1) integrin). Hydrolyzes the Aalpha-chain of fibrinogen, without cleavage of Bbeta- and gamma-chains. Degrades type IV collagen (but not types I, II and V), fibronectin and vitronectin and also integrins alpha-1/beta-1 (ITGA1/ITGB1) and alpha-5/beta/1 (ITGA5/ITGB1) (but not alpha-V/beta-3 (ITGAV/ITGB3) and alpha-V/beta-5 (ITGAV/ITGB5) integrins). Both metalloproteinase (peptidase M12B) and disintegrin-like domains (recombinantly expressed and named halydin) play characteristic roles to inhibit human platelet aggregation. Induces apoptosis and strongly inhibits proliferation of endothelial cells as well as adhesion of the cells to extracellular matrix proteins. The apoptosis is closely associated with activation of caspase-3 and decreased level of Bcl-X(L)/Bax. Apohalysase, which lacks metalloprotease activity, is also able to induce the apoptosis. Cleaves insulin B chain at '34-His-|-Leu-35', '37-Glu-|-Ala-38', '38-Ala-|-Leu-39', '39-Leu-|-Tyr-40', '40-Tyr-|-Leu-41', '47-Gly-|-Phe-48' and '48-Phe-|-Phe-49' bonds. The sequence is that of Zinc metalloproteinase-disintegrin-like halysase from Gloydius halys (Chinese water mocassin).